The following is a 144-amino-acid chain: Eukaryotic translation initiation factor 1A (144 aa).

Residues 1 to 15 show a composition bias toward basic residues; sequence MPKNKGKGGKNRRRG. Disordered regions lie at residues 1 to 26 and 114 to 144; these read MPKN…KREL and KINE…IDDI. A compositionally biased stretch (basic and acidic residues) spans 16–26; it reads KNENESEKREL. Residues 22-96 form the S1-like domain; that stretch reads EKRELVFKED…NKADVILKYN (75 aa). The segment covering 124 to 144 has biased composition (acidic residues); the sequence is GDDDEIQFDDIGDDDEDIDDI.

This sequence belongs to the eIF-1A family. Component of the 43S pre-initiation complex (43S PIC), which is composed of the 40S ribosomal subunit, EIF1, eIF1A (EIF1AX), eIF3 complex, EIF5 and eIF2-GTP-initiator tRNA complex (eIF2 ternary complex). Interacts with EIF5; this interaction contributes to the maintenance of EIF1 within the open 43S PIC. Interacts through its C-terminal domain (CTD) with the CTD of EIF5B; from the location of the start codon by the 43S complex until the formation of the 80S complex.

It is found in the cytoplasm. In terms of biological role, component of the 43S pre-initiation complex (43S PIC), which binds to the mRNA cap-proximal region, scans mRNA 5'-untranslated region, and locates the initiation codon. This protein enhances formation of the cap-proximal complex. Together with EIF1, facilitates scanning, start codon recognition, promotion of the assembly of 48S complex at the initiation codon (43S PIC becomes 48S PIC after the start codon is reached), and dissociation of aberrant complexes. After start codon location, together with EIF5B orients the initiator methionine-tRNA in a conformation that allows 60S ribosomal subunit joining to form the 80S initiation complex. Is released after 80S initiation complex formation, just after GTP hydrolysis by EIF5B, and before release of EIF5B. Its globular part is located in the A site of the 40S ribosomal subunit. Its interaction with EIF5 during scanning contribute to the maintenance of EIF1 within the open 43S PIC. In contrast to yeast orthologs, does not bind EIF1. The polypeptide is Eukaryotic translation initiation factor 1A (Eif1a) (Mus musculus (Mouse)).